A 277-amino-acid chain; its full sequence is Cell division protein ZipA (277 aa).

Residues 1-5 (MQDLR) lie on the Periplasmic side of the membrane. The chain crosses the membrane as a helical span at residues 6–26 (LMLLLFGVITIIVLFLHGVWA). The Cytoplasmic portion of the chain corresponds to 27 to 277 (RRKERSALFY…NALIRSTPHL (251 aa)). Residues 120-139 (QKKSDDLSHQSKETHHPSIQ) form a disordered region.

Belongs to the ZipA family. Interacts with FtsZ via their C-terminal domains.

The protein localises to the cell inner membrane. In terms of biological role, essential cell division protein that stabilizes the FtsZ protofilaments by cross-linking them and that serves as a cytoplasmic membrane anchor for the Z ring. Also required for the recruitment to the septal ring of downstream cell division proteins. This is Cell division protein ZipA from Hamiltonella defensa subsp. Acyrthosiphon pisum (strain 5AT).